A 418-amino-acid polypeptide reads, in one-letter code: Pentatricopeptide repeat-containing protein At2g18520, mitochondrial (418 aa).

Residues 1–14 (MTSSRLYLRFLRRF) constitute a mitochondrion transit peptide. 8 PPR repeats span residues 101 to 135 (TETFLSTLIRSYGRASMFDHAMKMFEEMDKLGTPR), 136 to 166 (TVVSFNALLAACLHSDLFERVPQLFDEFPQR), 173 to 207 (DKISYGMLIKSYCDSGKPEKAMEIMRDMEVKGVEV), 208 to 242 (TIIAFTTILGSLYKNGLVDEAESLWIEMVNKGCDL), 243 to 276 (DNTVYNVRLMNAAKESPERVKELMEEMSSVGLKP), 277 to 311 (DTVSYNYLMTAYCVKGMMSEAKKVYEGLEQPNAAT), 312 to 342 (FRTLIFHLCINGLYDQGLTVFKKSAIVHKIP), and 343 to 373 (DFKTCKHLTEGLVKNNRMEDARGVARIVKKK).

The protein belongs to the PPR family. P subfamily.

It localises to the mitochondrion. The polypeptide is Pentatricopeptide repeat-containing protein At2g18520, mitochondrial (Arabidopsis thaliana (Mouse-ear cress)).